We begin with the raw amino-acid sequence, 276 residues long: Glutathione S-transferase-like protein ustS (276 aa).

The region spanning 16-109 (STLPGTSKSW…HLDETYPDPP (94 aa)) is the GST N-terminal domain.

Belongs to the GST superfamily.

It functions in the pathway mycotoxin biosynthesis. Glutathione S-transferase-like protein; part of the gene cluster that mediates the biosynthesis of the secondary metabolite ustiloxin B, an antimitotic tetrapeptide. First, ustA is processed by the subtilisin-like endoprotease Kex2 that is outside the ustiloxin B gene cluster, at the C-terminal side of Arg-Lys, after transfer to Golgi apparatus through the endoplasmic reticulum (ER). Cleavage by KEX2 generates 16 peptides YAIG-I to YAIG-XVI. To process the precursor peptide further, at least two peptidases are necessary to cleave the N-terminal and C-terminal sides of the Tyr-Ala-Ile-Gly core peptide which serves as backbone for the synthesis of ustiloxin B, through cyclization and modification of the tyrosine with a non-protein coding amino acid, norvaline. One of the two peptidases must be the serine peptidase ustP; and the other pepdidase is probably ustH. Macrocyclization of the core peptide derived from ustA requires the tyrosinase ustQ, as well as the homologous oxidases ustYa and ustYb, and leads to the production of the first cyclization product N-desmethylustiloxin F. For the formation of N-desmethylustiloxin F, three oxidation steps are required, hydroxylation at the benzylic position, hydroxylation at either the aromatic ring of Tyr or beta-position of Ile, and oxidative cyclization. UstQ may catalyze the oxidation of a phenol moiety, whereas the ustYa and ustYb are most likely responsible for the remaining two-step oxidations. N-desmethylustiloxin F is then methylated by ustM to yield ustiloxin F which in turn substrate of the cytochrome P450 monooxygenase ustC which catalyzes the formation of S-deoxyustiloxin H. The flavoprotein monooxygenases ustF1 and ustF2 then participate in the modification of the side chain of S-deoxyustiloxin H, leading to the synthesis of an oxime intermediate, via ustiloxin H. Finally, carboxylative dehydration performed by the cysteine desulfurase-like protein ustD yields ustiloxin B. The protein is Glutathione S-transferase-like protein ustS of Aspergillus flavus (strain ATCC 200026 / FGSC A1120 / IAM 13836 / NRRL 3357 / JCM 12722 / SRRC 167).